A 264-amino-acid chain; its full sequence is S-adenosylmethionine decarboxylase proenzyme (264 aa).

The active-site Schiff-base intermediate with substrate; via pyruvic acid is Ser112. The residue at position 112 (Ser112) is a Pyruvic acid (Ser); by autocatalysis. His117 acts as the Proton acceptor; for processing activity in catalysis. The active-site Proton donor; for catalytic activity is the Cys140.

Belongs to the prokaryotic AdoMetDC family. Type 2 subfamily. Heterooctamer of four alpha and four beta chains arranged as a tetramer of alpha/beta heterodimers. Pyruvate serves as cofactor. Post-translationally, is synthesized initially as an inactive proenzyme. Formation of the active enzyme involves a self-maturation process in which the active site pyruvoyl group is generated from an internal serine residue via an autocatalytic post-translational modification. Two non-identical subunits are generated from the proenzyme in this reaction, and the pyruvate is formed at the N-terminus of the alpha chain, which is derived from the carboxyl end of the proenzyme. The post-translation cleavage follows an unusual pathway, termed non-hydrolytic serinolysis, in which the side chain hydroxyl group of the serine supplies its oxygen atom to form the C-terminus of the beta chain, while the remainder of the serine residue undergoes an oxidative deamination to produce ammonia and the pyruvoyl group blocking the N-terminus of the alpha chain.

It catalyses the reaction S-adenosyl-L-methionine + H(+) = S-adenosyl 3-(methylsulfanyl)propylamine + CO2. It participates in amine and polyamine biosynthesis; S-adenosylmethioninamine biosynthesis; S-adenosylmethioninamine from S-adenosyl-L-methionine: step 1/1. Functionally, catalyzes the decarboxylation of S-adenosylmethionine to S-adenosylmethioninamine (dcAdoMet), the propylamine donor required for the synthesis of the polyamines spermine and spermidine from the diamine putrescine. In Yersinia pseudotuberculosis serotype O:1b (strain IP 31758), this protein is S-adenosylmethionine decarboxylase proenzyme.